Consider the following 919-residue polypeptide: Isoleucine--tRNA ligase (919 aa).

The 'HIGH' region signature appears at Pro59–His69. Residue Glu570 coordinates L-isoleucyl-5'-AMP. The 'KMSKS' region signature appears at Lys611–Ser615. An ATP-binding site is contributed by Lys614. Zn(2+) is bound by residues Cys893, Cys896, Cys908, and Cys911.

This sequence belongs to the class-I aminoacyl-tRNA synthetase family. IleS type 1 subfamily. As to quaternary structure, monomer. Zn(2+) serves as cofactor.

Its subcellular location is the cytoplasm. The catalysed reaction is tRNA(Ile) + L-isoleucine + ATP = L-isoleucyl-tRNA(Ile) + AMP + diphosphate. Its function is as follows. Catalyzes the attachment of isoleucine to tRNA(Ile). As IleRS can inadvertently accommodate and process structurally similar amino acids such as valine, to avoid such errors it has two additional distinct tRNA(Ile)-dependent editing activities. One activity is designated as 'pretransfer' editing and involves the hydrolysis of activated Val-AMP. The other activity is designated 'posttransfer' editing and involves deacylation of mischarged Val-tRNA(Ile). The chain is Isoleucine--tRNA ligase from Campylobacter curvus (strain 525.92).